A 403-amino-acid chain; its full sequence is Argininosuccinate synthase (403 aa).

Residues 12–20 (AYSGGLDTS) and alanine 39 contribute to the ATP site. Residues tyrosine 91 and serine 96 each coordinate L-citrulline. Glycine 121 contacts ATP. Positions 123, 127, and 128 each coordinate L-aspartate. Residue asparagine 127 coordinates L-citrulline. Residues arginine 131, serine 180, serine 189, glutamate 265, and tyrosine 277 each coordinate L-citrulline.

It belongs to the argininosuccinate synthase family. Type 1 subfamily. As to quaternary structure, homotetramer.

Its subcellular location is the cytoplasm. It catalyses the reaction L-citrulline + L-aspartate + ATP = 2-(N(omega)-L-arginino)succinate + AMP + diphosphate + H(+). It functions in the pathway amino-acid biosynthesis; L-arginine biosynthesis; L-arginine from L-ornithine and carbamoyl phosphate: step 2/3. The protein is Argininosuccinate synthase of Vibrio vulnificus (strain CMCP6).